The following is a 303-amino-acid chain: Large ribosomal subunit protein uL1m (303 aa).

The protein belongs to the universal ribosomal protein uL1 family. As to quaternary structure, component of the mitochondrial large ribosomal subunit (mt-LSU). Mature N.crassa 74S mitochondrial ribosomes consist of a small (37S) and a large (54S) subunit. The 37S small subunit contains a 16S ribosomal RNA (16S mt-rRNA) and 32 different proteins. The 54S large subunit contains a 23S rRNA (23S mt-rRNA) and 42 different proteins.

The protein resides in the mitochondrion. Component of the mitochondrial ribosome (mitoribosome), a dedicated translation machinery responsible for the synthesis of mitochondrial genome-encoded proteins, including at least some of the essential transmembrane subunits of the mitochondrial respiratory chain. The mitoribosomes are attached to the mitochondrial inner membrane and translation products are cotranslationally integrated into the membrane. The sequence is that of Large ribosomal subunit protein uL1m (mrpl1) from Neurospora crassa (strain ATCC 24698 / 74-OR23-1A / CBS 708.71 / DSM 1257 / FGSC 987).